A 483-amino-acid polypeptide reads, in one-letter code: Succinate semialdehyde dehydrogenase (483 aa).

Residues 156–157 (WN), 180–183 (KPAP), and 233–234 (GS) each bind NAD(+). The active-site Proton acceptor is glutamate 255. Leucine 256 is an NAD(+) binding site. Residue cysteine 289 is the Nucleophile of the active site. Glutamate 386 contacts NAD(+).

The protein belongs to the aldehyde dehydrogenase family. As to quaternary structure, homotetramer.

It catalyses the reaction succinate semialdehyde + NAD(+) + H2O = succinate + NADH + 2 H(+). In terms of biological role, involved in the degradation of the pyridine ring of trigonelline (TG; N-methylnicotinate) into succinate and methylamine as carbon and nitrogen sources, respectively. Catalyzes the NAD(+)-dependent oxidation of succinate semialdehyde to succinate. This Acinetobacter baylyi (strain ATCC 33305 / BD413 / ADP1) protein is Succinate semialdehyde dehydrogenase.